The sequence spans 978 residues: Chaperone protein ClpB2, chloroplastic (978 aa).

Residues 1-76 (MAAAPPLAAG…RMPPRTLSVR (76 aa)) constitute a chloroplast transit peptide. Positions 85–229 (TQQEFTEMAW…KTAIESIRGK (145 aa)) constitute a Clp R domain. 2 repeat regions span residues 89-154 (FTEM…IQRQ) and 166-229 (LGRD…IRGK). Residues 244-492 (LDKYGKDLTA…KLKMEITSKP (249 aa)) form an i region. Residues 289 to 296 (GEPGVGKT) and 692 to 699 (GPTGVGKT) each bind ATP. Residues 618–809 (VTQDDIAEIV…IIIMTSNVGS (192 aa)) are II.

The protein belongs to the ClpA/ClpB family.

The protein localises to the plastid. The protein resides in the chloroplast. Functionally, molecular chaperone that may play a role in chloroplast development. In Oryza sativa subsp. japonica (Rice), this protein is Chaperone protein ClpB2, chloroplastic (CLPB2).